A 631-amino-acid polypeptide reads, in one-letter code: Chaperone protein DnaK (631 aa).

A Phosphothreonine; by autocatalysis modification is found at threonine 197. Residues 598–631 form a disordered region; the sequence is MYKKEQGQTGGTEQGGTEQKKSGGDDDVIDAEVE. Residues 622–631 are compositionally biased toward acidic residues; the sequence is DDDVIDAEVE.

Belongs to the heat shock protein 70 family.

In terms of biological role, acts as a chaperone. The chain is Chaperone protein DnaK from Nitratiruptor sp. (strain SB155-2).